The chain runs to 452 residues: Mitochondrial import inner membrane translocase subunit TIM44 (452 aa).

The residue at position 128 (Thr-128) is a Phosphothreonine. 166-173 is a binding site for ATP; that stretch reads SGEKLGKT. Lys-177 is subject to N6-succinyllysine. At Ser-180 the chain carries Phosphoserine. Residue Lys-217 is modified to N6-succinyllysine.

The protein belongs to the Tim44 family. As to quaternary structure, probable component of the PAM complex at least composed of a mitochondrial HSP70 protein, GRPEL1 or GRPEL2, TIMM44, TIMM16/PAM16 and TIMM14/DNAJC19. The complex interacts with the TIMM23 component of the TIM23 complex. Interacts with SLC25A4/ANT1 and SLC25A5/ANT2; leading to inhibit the presequence translocase TIMM23, thereby promoting stabilization of PINK1.

It localises to the mitochondrion inner membrane. Its function is as follows. Essential component of the PAM complex, a complex required for the translocation of transit peptide-containing proteins from the inner membrane into the mitochondrial matrix in an ATP-dependent manner. Recruits mitochondrial HSP70 to drive protein translocation into the matrix using ATP as an energy source. In Mus musculus (Mouse), this protein is Mitochondrial import inner membrane translocase subunit TIM44 (Timm44).